A 266-amino-acid chain; its full sequence is ATP synthase subunit a (266 aa).

The next 5 membrane-spanning stretches (helical) occupy residues 28–48 (SINV…LVIF), 88–108 (LIAP…MMDL), 141–161 (DVNI…FYSI), 206–226 (LFGN…LLPW), and 237–257 (AIFH…LTVV).

It belongs to the ATPase A chain family. In terms of assembly, F-type ATPases have 2 components, CF(1) - the catalytic core - and CF(0) - the membrane proton channel. CF(1) has five subunits: alpha(3), beta(3), gamma(1), delta(1), epsilon(1). CF(0) has three main subunits: a(1), b(2) and c(9-12). The alpha and beta chains form an alternating ring which encloses part of the gamma chain. CF(1) is attached to CF(0) by a central stalk formed by the gamma and epsilon chains, while a peripheral stalk is formed by the delta and b chains.

The protein resides in the cell inner membrane. In terms of biological role, key component of the proton channel; it plays a direct role in the translocation of protons across the membrane. The sequence is that of ATP synthase subunit a from Pectobacterium atrosepticum (strain SCRI 1043 / ATCC BAA-672) (Erwinia carotovora subsp. atroseptica).